The following is a 560-amino-acid chain: Solute carrier family 49 member A3 (560 aa).

Helical transmembrane passes span 30–50 (WVFL…WLSF), 70–90 (WLSL…IWIL), 100–120 (ILGA…CMVV), 125–145 (PFAF…LVIF), 166–186 (LATM…PVLV), 192–212 (IPLM…LSTI), 250–270 (VILA…SALL), 282–302 (GFSG…ALAL), 318–338 (IGLC…QLQG), 341–361 (LALA…GPVA), 379–399 (GMIF…MTAL), and 422–442 (VSLL…AVFF). Residues 451 to 540 (AESGEPPSTR…PGRLAGRVQA (90 aa)) form a disordered region. Residues 466–481 (ADSGPGVDRGGAGRAG) show a composition bias toward gly residues.

It belongs to the major facilitator superfamily.

Its subcellular location is the membrane. The polypeptide is Solute carrier family 49 member A3 (Homo sapiens (Human)).